We begin with the raw amino-acid sequence, 335 residues long: tRNA N6-adenosine threonylcarbamoyltransferase (335 aa).

A divalent metal cation-binding residues include histidine 109, histidine 113, and tyrosine 130. Residues 130-134 (YVSGG), aspartate 162, glycine 177, glutamate 181, and asparagine 266 contribute to the substrate site. An a divalent metal cation-binding site is contributed by aspartate 294.

This sequence belongs to the KAE1 / TsaD family. Component of the EKC/KEOPS complex composed of at least GON7, TP53RK, TPRKB, OSGEP and LAGE3; the whole complex dimerizes. A divalent metal cation serves as cofactor.

It is found in the cytoplasm. The protein localises to the nucleus. The catalysed reaction is L-threonylcarbamoyladenylate + adenosine(37) in tRNA = N(6)-L-threonylcarbamoyladenosine(37) in tRNA + AMP + H(+). Component of the EKC/KEOPS complex that is required for the formation of a threonylcarbamoyl group on adenosine at position 37 (t(6)A37) in tRNAs that read codons beginning with adenine. The complex is probably involved in the transfer of the threonylcarbamoyl moiety of threonylcarbamoyl-AMP (TC-AMP) to the N6 group of A37. OSGEP likely plays a direct catalytic role in this reaction, but requires other protein(s) of the complex to fulfill this activity. The protein is tRNA N6-adenosine threonylcarbamoyltransferase of Bos taurus (Bovine).